Here is a 248-residue protein sequence, read N- to C-terminus: Ribosomal RNA small subunit methyltransferase G (248 aa).

S-adenosyl-L-methionine-binding positions include glycine 93, leucine 98, 143–144 (AE), and arginine 161.

Belongs to the methyltransferase superfamily. RNA methyltransferase RsmG family.

Its subcellular location is the cytoplasm. Specifically methylates the N7 position of guanine in position 518 of 16S rRNA. The chain is Ribosomal RNA small subunit methyltransferase G from Mycobacterium leprae (strain Br4923).